The sequence spans 255 residues: Small ribosomal subunit protein eS1 (255 aa).

The segment covering 1–18 (MAVGKNKRLSKGKKGLKK) has biased composition (basic residues). The tract at residues 1-20 (MAVGKNKRLSKGKKGLKKRV) is disordered. An N-acetylalanine; partial modification is found at alanine 2.

The protein belongs to the eukaryotic ribosomal protein eS1 family. In terms of assembly, component of the small ribosomal subunit. Mature ribosomes consist of a small (40S) and a large (60S) subunit. The 40S subunit contains about 33 different proteins and 1 molecule of RNA (18S). The 60S subunit contains about 49 different proteins and 3 molecules of RNA (25S, 5.8S and 5S).

The protein resides in the cytoplasm. This is Small ribosomal subunit protein eS1 from Coccidioides immitis (strain RS) (Valley fever fungus).